Here is a 525-residue protein sequence, read N- to C-terminus: Sucrose transport protein (525 aa).

Residues M1–K37 are Cytoplasmic-facing. Transmembrane regions (helical) follow at residues L38–L58, W72–G92, P107–A127, A145–G165, Y184–G204, S230–V250, M295–F315, G338–L358, L373–K393, L422–L442, G455–T475, and L488–L508. The Cytoplasmic portion of the chain corresponds to L509–H525.

It belongs to the glycoside-pentoside-hexuronide (GPH) cation symporter transporter (TC 2.A.2.4) family.

Its subcellular location is the membrane. Its pathway is glycan biosynthesis; sucrose metabolism. Functionally, responsible for the transport of sucrose into the cell, with the concomitant uptake of protons (symport system). Can also transport maltose at a lesser rate. The sequence is that of Sucrose transport protein from Spinacia oleracea (Spinach).